The following is a 469-amino-acid chain: Calcium-binding mitochondrial carrier protein SCaMC-2-A (469 aa).

The Mitochondrial intermembrane portion of the chain corresponds to 1 to 189; sequence MLCLCLYVPV…EHLTGMWWRH (189 aa). EF-hand domains are found at residues 47 to 80, 78 to 113, and 114 to 149; these read TYRR…QDHE, DHEK…LGVH, and ISLK…QPAE. Ca(2+) contacts are provided by aspartate 64, glutamine 66, and glutamate 71. Solcar repeat units follow at residues 184 to 270, 278 to 363, and 375 to 463; these read GMWW…IKRV, LGIS…LKNT, and PGVF…IKST. A helical membrane pass occupies residues 190–207; the sequence is LVSGGGAGAVSRTCTAPL. Residues 208–244 lie on the Mitochondrial matrix side of the membrane; the sequence is DRLKVLMQVHGCQGKSMCLMSGLTQMIKEGGVRSLWR. The chain crosses the membrane as a helical span at residues 245-264; that stretch reads GNGINVIKIAPETALKFMAY. The Mitochondrial intermembrane portion of the chain corresponds to 265-287; it reads EQIKRVMGSSQETLGISERFVAG. The chain crosses the membrane as a helical span at residues 288-301; that stretch reads SLAGVIAQSTIYPM. Residues 302–337 lie on the Mitochondrial matrix side of the membrane; sequence EVLKTRLALRKTGQYKGISDCAKHILKTEGMSAFYK. The chain crosses the membrane as a helical span at residues 338–357; the sequence is GYVPNMLGIIPYAGIDLAVY. Residues 358-380 lie on the Mitochondrial intermembrane side of the membrane; sequence ETLKNTWLQRYGTENADPGVFVL. Residues 381-398 traverse the membrane as a helical segment; sequence LACGTVSSTCGQLASYPL. The Mitochondrial matrix segment spans residues 399–437; that stretch reads ALIRTRMQAQASVEGSSQVSMTGLFKQIMKTEGPTGLYR. A helical membrane pass occupies residues 438–457; that stretch reads GLTPNFLKVIPAVSISYVVY. The Mitochondrial intermembrane portion of the chain corresponds to 458 to 469; the sequence is EHIKSTLGVRSR.

Belongs to the mitochondrial carrier (TC 2.A.29) family.

Its subcellular location is the mitochondrion inner membrane. Its function is as follows. Calcium-dependent mitochondrial solute carrier. The polypeptide is Calcium-binding mitochondrial carrier protein SCaMC-2-A (slc25a25a) (Danio rerio (Zebrafish)).